Consider the following 462-residue polypeptide: N-myc proto-oncogene protein (462 aa).

Residues 19 to 47 (LEFDSLQPCFYPDEDDFYFGGPDSTPPGE) form an interaction with AURKA region. The interaction with AURKA and FBXW7 stretch occupies residues 61 to 90 (LSPSRAFPEHSPEPSNWATEMLLPEADLWG). The 9aaTAD motif lies at 76–85 (NWATEMLLPE). 3 disordered regions span residues 133–177 (EKLQ…ATLP), 232–290 (AAPA…SNNK), and 332–390 (APSP…LERQ). Over residues 138–174 (GHGPPGASSSCPAPGVGASSSGGRALGGSASAGRTGA) the composition is skewed to low complexity. Positions 257-276 (TLSDSDDEDDEEEDEEEEID) are enriched in acidic residues. S259 and S261 each carry phosphoserine; by CK2. The region spanning 379-431 (ERRRNHNILERQRRNDLRSSFLTLRDHVPELVKNEKAAKVVILKKATEYVHAL) is the bHLH domain. The leucine-zipper stretch occupies residues 431-452 (LQANEHQLLLEKEKLQARQQQL).

Efficient DNA binding requires dimerization with another bHLH protein. Binds DNA as a heterodimer with MAX. Interacts with KDM5A, KDM5B and HUWE1. Interacts with MYCNOS. Interacts with AURKA; interaction is phospho-independent and triggers AURKA activation; AURKA competes with FBXW7 for binding to unphosphorylated MYCN but not for binding to unphosphorylated MYCN. Interacts with FBXW7; FBXW7 competes with AURKA for binding to unphosphorylated MYCN but not for binding to phosphorylated MYCN. In terms of processing, phosphorylated by GSK3-beta which may promote its degradation. Phosphorylated by AURKA.

It is found in the nucleus. Its function is as follows. Positively regulates the transcription of MYCNOS in neuroblastoma cells. The sequence is that of N-myc proto-oncogene protein (Mycn) from Rattus norvegicus (Rat).